The chain runs to 608 residues: Phosphogluconate dehydratase (608 aa).

2 residues coordinate [4Fe-4S] cluster: C154 and C221.

The protein belongs to the IlvD/Edd family. [4Fe-4S] cluster is required as a cofactor.

The catalysed reaction is 6-phospho-D-gluconate = 2-dehydro-3-deoxy-6-phospho-D-gluconate + H2O. It functions in the pathway carbohydrate metabolism; Entner-Doudoroff pathway. In terms of biological role, catalyzes the dehydration of 6-phospho-D-gluconate to 2-dehydro-3-deoxy-6-phospho-D-gluconate. The sequence is that of Phosphogluconate dehydratase from Helicobacter pylori (strain J99 / ATCC 700824) (Campylobacter pylori J99).